We begin with the raw amino-acid sequence, 246 residues long: DNA repair protein RecO (246 aa).

It belongs to the RecO family.

Its function is as follows. Involved in DNA repair and RecF pathway recombination. This is DNA repair protein RecO from Proteus mirabilis (strain HI4320).